The following is a 465-amino-acid chain: 5-cytosine rRNA methyltransferase nsun-4 (465 aa).

A mitochondrion-targeting transit peptide spans 1-6 (MSCLRQ). The span at 106–130 (QAIETKRKSVEEKANRETQKVKHEI) shows a compositional bias: basic and acidic residues. Positions 106–145 (QAIETKRKSVEEKANRETQKVKHEISNPSTSTNTEDSEPD) are disordered. S-adenosyl-L-methionine contacts are provided by residues 260–266 (CAAPGGK), D283, D316, and D335. The active-site Nucleophile is the C390.

This sequence belongs to the class I-like SAM-binding methyltransferase superfamily. RsmB/NOP family.

It is found in the mitochondrion. It catalyses the reaction a cytidine in rRNA + S-adenosyl-L-methionine = a 5-methylcytidine in rRNA + S-adenosyl-L-homocysteine + H(+). The enzyme catalyses a cytidine in tRNA + S-adenosyl-L-methionine = a 5-methylcytidine in tRNA + S-adenosyl-L-homocysteine + H(+). Mitochondrial methyltransferase which methylates cytosine to 5-methylcytosine (m5C) in rRNAs and tRNAs at multiple sites. May play a role in the translation of leucine and proline codons. This chain is 5-cytosine rRNA methyltransferase nsun-4, found in Caenorhabditis elegans.